The following is a 268-amino-acid chain: Tryptophan synthase alpha chain (268 aa).

Catalysis depends on proton acceptor residues Glu49 and Asp60.

This sequence belongs to the TrpA family. As to quaternary structure, tetramer of two alpha and two beta chains.

It catalyses the reaction (1S,2R)-1-C-(indol-3-yl)glycerol 3-phosphate + L-serine = D-glyceraldehyde 3-phosphate + L-tryptophan + H2O. Its pathway is amino-acid biosynthesis; L-tryptophan biosynthesis; L-tryptophan from chorismate: step 5/5. In terms of biological role, the alpha subunit is responsible for the aldol cleavage of indoleglycerol phosphate to indole and glyceraldehyde 3-phosphate. This Xanthomonas oryzae pv. oryzae (strain MAFF 311018) protein is Tryptophan synthase alpha chain.